The primary structure comprises 400 residues: MKLKTLSVGEVNNYVKKLVENDFILKNLNVKGEISNLKFHSSGHIYFSLKDENSKVNCIMFKNNAVNLDFRLEEGMKVEIKARLGVYHKEGTYQLYCENIKKAGIGELFEEFHKLKKELSEEGIFDEKYKRALPKFPKRIGIITARTGAAVRDIINVIQRRNKSLDIILYPAKVQGENAADSIIEGIRYFNNEKSVDVIILGRGGGSIEELWTFNNRDLAYEIFNSRIPTVSAVGHEVDFTISDFVSDMRAPTPSAAGELVSPSLQEMINDLLNKKEFLHRAIDRKFLNAKKDVDLLHKGLKGNNPKHIIEKRIKEVNSLEEKLNFLGKRKIDKAKDELIALNSILQTLNPLNTLGRGYSVIMDKKDKVINEVSELKKNDMVKVIMKDGSVNIDIKIINE.

The protein belongs to the XseA family. Heterooligomer composed of large and small subunits.

The protein resides in the cytoplasm. The enzyme catalyses Exonucleolytic cleavage in either 5'- to 3'- or 3'- to 5'-direction to yield nucleoside 5'-phosphates.. Its function is as follows. Bidirectionally degrades single-stranded DNA into large acid-insoluble oligonucleotides, which are then degraded further into small acid-soluble oligonucleotides. The chain is Exodeoxyribonuclease 7 large subunit from Clostridium perfringens (strain ATCC 13124 / DSM 756 / JCM 1290 / NCIMB 6125 / NCTC 8237 / Type A).